A 172-amino-acid chain; its full sequence is 3-hydroxydecanoyl-[acyl-carrier-protein] dehydratase (172 aa).

Residue His71 is part of the active site.

Belongs to the thioester dehydratase family. FabA subfamily. As to quaternary structure, homodimer.

It localises to the cytoplasm. It carries out the reaction a (3R)-hydroxyacyl-[ACP] = a (2E)-enoyl-[ACP] + H2O. The catalysed reaction is (3R)-hydroxydecanoyl-[ACP] = (2E)-decenoyl-[ACP] + H2O. It catalyses the reaction (2E)-decenoyl-[ACP] = (3Z)-decenoyl-[ACP]. It participates in lipid metabolism; fatty acid biosynthesis. Its function is as follows. Necessary for the introduction of cis unsaturation into fatty acids. Catalyzes the dehydration of (3R)-3-hydroxydecanoyl-ACP to E-(2)-decenoyl-ACP and then its isomerization to Z-(3)-decenoyl-ACP. Can catalyze the dehydratase reaction for beta-hydroxyacyl-ACPs with saturated chain lengths up to 16:0, being most active on intermediate chain length. The protein is 3-hydroxydecanoyl-[acyl-carrier-protein] dehydratase of Salmonella agona (strain SL483).